A 504-amino-acid chain; its full sequence is Flavin-dependent halogenase armH3 (504 aa).

Residues Gly-16, Ala-19, Glu-49, and Ala-149 each contribute to the FAD site. 2 residues coordinate chloride: Ser-329 and Gly-330. Residue Ile-331 coordinates FAD. A disordered region spans residues 444–475; it reads NNLRTPVDTGAADVKAKHAPSETDAQNPLQSM.

This sequence belongs to the flavin-dependent halogenase family.

The enzyme catalyses melleolide F + FADH2 + chloride + O2 = 6'-chloromelleolide F + FAD + 2 H2O + H(+). Flavin-dependent halogenase involved in the biosynthesis of melleolides, a range of antifungal and phytotoxic polyketide derivatives composed of an orsellinic acid (OA) moiety esterified to various sesquiterpene alcohols. The halogenase catalyzes the transfer of a single chlorine atom to the melleolide backbone, resulting in a 6'-chloromelleolide product. The enzyme acts on free substrate and does not depend on carrier-protein-dependent acceptor molecules. The chain is Flavin-dependent halogenase armH3 from Armillaria mellea (Honey mushroom).